Consider the following 511-residue polypeptide: Exodeoxyribonuclease 7 large subunit (511 aa).

This sequence belongs to the XseA family. As to quaternary structure, heterooligomer composed of large and small subunits.

Its subcellular location is the cytoplasm. It carries out the reaction Exonucleolytic cleavage in either 5'- to 3'- or 3'- to 5'-direction to yield nucleoside 5'-phosphates.. In terms of biological role, bidirectionally degrades single-stranded DNA into large acid-insoluble oligonucleotides, which are then degraded further into small acid-soluble oligonucleotides. The polypeptide is Exodeoxyribonuclease 7 large subunit (Brucella melitensis biotype 1 (strain ATCC 23456 / CCUG 17765 / NCTC 10094 / 16M)).